The following is a 441-amino-acid chain: Damage-control phosphatase ARMT1 (441 aa).

Ala-2 bears the N-acetylalanine mark. Position 40 is an N6-acetyllysine (Lys-40). The residue at position 102 (Ser-102) is a Phosphoserine. Residues Asp-253 and Asn-254 each contribute to the Mn(2+) site. 253–254 (DN) contacts substrate. The S-adenosyl-L-methionine site is built by Glu-258 and Asp-291. Mn(2+) is bound at residue Asp-291. Substrate contacts are provided by residues 367-371 (DLNYR) and Lys-404. The Subfamily III RTxK motif motif lies at 401 to 404 (RTLK).

It belongs to the damage-control phosphatase family. Sugar phosphate phosphatase III subfamily. Mn(2+) serves as cofactor. Requires Ni(2+) as cofactor. In terms of processing, automethylated.

It catalyses the reaction beta-D-fructose 1-phosphate + H2O = D-fructose + phosphate. The catalysed reaction is beta-D-fructose 6-phosphate = dihydroxyacetone + D-glyceraldehyde 3-phosphate. The enzyme catalyses L-glutamyl-[protein] + S-adenosyl-L-methionine = [protein]-L-glutamate 5-O-methyl ester + S-adenosyl-L-homocysteine. Functionally, metal-dependent phosphatase that shows phosphatase activity against several substrates, including fructose-1-phosphate and fructose-6-phosphate. Its preference for fructose-1-phosphate, a strong glycating agent that causes DNA damage rather than a canonical yeast metabolite, suggests a damage-control function in hexose phosphate metabolism. Has also been shown to have O-methyltransferase activity that methylates glutamate residues of target proteins to form gamma-glutamyl methyl ester residues. Possibly methylates PCNA, suggesting it is involved in the DNA damage response. The chain is Damage-control phosphatase ARMT1 from Bos taurus (Bovine).